A 361-amino-acid chain; its full sequence is Trehalose 6-phosphate phosphatase RA3 (361 aa).

The protein belongs to the trehalose phosphatase family. It depends on a divalent metal cation as a cofactor. Expressed in axillary inflorescence meristems.

It carries out the reaction alpha,alpha-trehalose 6-phosphate + H2O = alpha,alpha-trehalose + phosphate. The protein operates within glycan biosynthesis; trehalose biosynthesis. Removes the phosphate from trehalose 6-phosphate to produce free trehalose. Is specific for trehalose 6-phosphate. Does not possess activity toward glucose, sucrose or fructose 6-phosphates. Regulates inflorescence branching. Required to establish the correct identity and determinacy of axillary meristems in both male and female inflorescences. May act through a sugar signal that moves into axillary meristems. Acts upstream of RA1. May have a transcriptional regulatory function. The chain is Trehalose 6-phosphate phosphatase RA3 from Zea mays (Maize).